The following is a 511-amino-acid chain: Cobyric acid synthase (511 aa).

In terms of domain architecture, GATase cobBQ-type spans 251–443 (LLDIAIICLP…IHGIFDNDVF (193 aa)). The active-site Nucleophile is the C332. Residue H435 is part of the active site.

Belongs to the CobB/CobQ family. CobQ subfamily.

It functions in the pathway cofactor biosynthesis; adenosylcobalamin biosynthesis. Catalyzes amidations at positions B, D, E, and G on adenosylcobyrinic A,C-diamide. NH(2) groups are provided by glutamine, and one molecule of ATP is hydrogenolyzed for each amidation. This chain is Cobyric acid synthase, found in Listeria monocytogenes serotype 4b (strain F2365).